A 446-amino-acid polypeptide reads, in one-letter code: UDP-N-acetylmuramoylalanine--D-glutamate ligase (446 aa).

115–121 lines the ATP pocket; that stretch reads GTNGKTT.

This sequence belongs to the MurCDEF family.

The protein resides in the cytoplasm. The catalysed reaction is UDP-N-acetyl-alpha-D-muramoyl-L-alanine + D-glutamate + ATP = UDP-N-acetyl-alpha-D-muramoyl-L-alanyl-D-glutamate + ADP + phosphate + H(+). It functions in the pathway cell wall biogenesis; peptidoglycan biosynthesis. Cell wall formation. Catalyzes the addition of glutamate to the nucleotide precursor UDP-N-acetylmuramoyl-L-alanine (UMA). The protein is UDP-N-acetylmuramoylalanine--D-glutamate ligase of Pelobacter propionicus (strain DSM 2379 / NBRC 103807 / OttBd1).